The chain runs to 602 residues: Aspartate--tRNA(Asp/Asn) ligase (602 aa).

E175 is a binding site for L-aspartate. The interval 199–202 (QIFK) is aspartate. R221 serves as a coordination point for L-aspartate. ATP is bound by residues 221-223 (RDE) and Q230. H458 provides a ligand contact to L-aspartate. E492 provides a ligand contact to ATP. R499 serves as a coordination point for L-aspartate. Position 544-547 (544-547 (GLDR)) interacts with ATP.

It belongs to the class-II aminoacyl-tRNA synthetase family. Type 1 subfamily. In terms of assembly, homodimer.

The protein resides in the cytoplasm. It catalyses the reaction tRNA(Asx) + L-aspartate + ATP = L-aspartyl-tRNA(Asx) + AMP + diphosphate. Aspartyl-tRNA synthetase with relaxed tRNA specificity since it is able to aspartylate not only its cognate tRNA(Asp) but also tRNA(Asn). Reaction proceeds in two steps: L-aspartate is first activated by ATP to form Asp-AMP and then transferred to the acceptor end of tRNA(Asp/Asn). The protein is Aspartate--tRNA(Asp/Asn) ligase of Cupriavidus necator (strain ATCC 17699 / DSM 428 / KCTC 22496 / NCIMB 10442 / H16 / Stanier 337) (Ralstonia eutropha).